The sequence spans 157 residues: Eukaryotic translation initiation factor 5A-1 (157 aa).

Ser2 bears the N-acetylserine mark. Phosphoserine is present on Ser2. A phosphothreonine mark is found at Thr7 and Thr10. Hypusine is present on Lys51. Ser74 is subject to Phosphoserine. A Glycyl lysine isopeptide (Lys-Gly) (interchain with G-Cter in ubiquitin) cross-link involves residue Lys86.

The protein belongs to the eIF-5A family. In terms of assembly, homodimer. Binds to 80S ribosomes. Actively translating ribosomes show mutually exclusive binding of eIF5a (HYP2 or ANB1) and EFT1/eEF2. Interacts with DYS1 and LIA1. Lys-51 undergoes hypusination, a unique post-translational modification that consists in the addition of a butylamino group from spermidine to lysine side chain, leading to the formation of the unusual amino acid hypusine. eIF-5As are the only known proteins to undergo this modification, which is essential for their function.

The protein resides in the cytoplasm. Its function is as follows. Translation factor that promotes translation elongation and termination, particularly upon ribosome stalling at specific amino acid sequence contexts. Binds between the exit (E) and peptidyl (P) site of the ribosome and promotes rescue of stalled ribosome: specifically required for efficient translation of polyproline-containing peptides as well as other motifs that stall the ribosome. Acts as a ribosome quality control (RQC) cofactor by joining the RQC complex to facilitate peptidyl transfer during CAT tailing step. Involved in actin dynamics and cell cycle progression, mRNA decay and probably in a pathway involved in stress response and maintenance of cell wall integrity. This Saccharomyces cerevisiae (strain ATCC 204508 / S288c) (Baker's yeast) protein is Eukaryotic translation initiation factor 5A-1 (HYP2).